Here is a 465-residue protein sequence, read N- to C-terminus: Argininosuccinate lyase (465 aa).

It belongs to the lyase 1 family. Argininosuccinate lyase subfamily.

The protein resides in the cytoplasm. The enzyme catalyses 2-(N(omega)-L-arginino)succinate = fumarate + L-arginine. It participates in amino-acid biosynthesis; L-arginine biosynthesis; L-arginine from L-ornithine and carbamoyl phosphate: step 3/3. In Rhodopseudomonas palustris (strain HaA2), this protein is Argininosuccinate lyase.